A 675-amino-acid polypeptide reads, in one-letter code: Calcium channel YVC1 (675 aa).

Topologically, residues 1-236 (MVSANGDLHL…PVRLKAPVYQ (236 aa)) are cytoplasmic. The chain crosses the membrane as a helical span at residues 237-257 (NYLQMIFSFLFLGLYTLVVNG). Topologically, residues 258–295 (KDSERVQSFDLLESIFYVFNTGFILDELTKLYYIGYAH) are vacuolar. The chain crosses the membrane as a helical span at residues 296-316 (LSFWNLFNDTTYLIITFAMGF). Residues 317–335 (RAMSVTPLNAKYSSEDWDK) are Cytoplasmic-facing. Residues 336 to 355 (ISYRVLSCAAPFVWSRLLLY) form a helical membrane-spanning segment. The Vacuolar segment spans residues 356-376 (LESQRFIGIMLVILKHMMKES). The chain crosses the membrane as a helical span at residues 377–397 (IVFFFLLFLIMIGFTQGFLGL). At 398 to 405 (DSADGKRD) the chain is on the cytoplasmic side. The helical transmembrane segment at 406–426 (ITGPILGNLTITVLGLGSFDV) threads the bilayer. Residues 427–436 (FEEFAPPYAA) lie on the Vacuolar side of the membrane. A helical transmembrane segment spans residues 437 to 457 (ILYYGYYFIVSVILLNILIAL). Over 458 to 675 (YSTAYQKVID…EKLDIKDKKE (218 aa)) the chain is Cytoplasmic. Residue T636 is modified to Phosphothreonine.

This sequence belongs to the transient receptor (TC 1.A.4) family.

It is found in the vacuole membrane. Functionally, required for release of calcium ions from the vacuole in response to hyperosmotic shock. The sequence is that of Calcium channel YVC1 from Saccharomyces cerevisiae (strain ATCC 204508 / S288c) (Baker's yeast).